We begin with the raw amino-acid sequence, 406 residues long: CCA-adding enzyme (406 aa).

The ATP site is built by G32 and R35. 2 residues coordinate CTP: G32 and R35. Residues D45 and D47 each coordinate Mg(2+). ATP-binding residues include R116, D159, R162, R165, and R168. 5 residues coordinate CTP: R116, D159, R162, R165, and R168.

Belongs to the tRNA nucleotidyltransferase/poly(A) polymerase family. Bacterial CCA-adding enzyme type 3 subfamily. Homodimer. Mg(2+) serves as cofactor.

It catalyses the reaction a tRNA precursor + 2 CTP + ATP = a tRNA with a 3' CCA end + 3 diphosphate. It carries out the reaction a tRNA with a 3' CCA end + 2 CTP + ATP = a tRNA with a 3' CCACCA end + 3 diphosphate. Functionally, catalyzes the addition and repair of the essential 3'-terminal CCA sequence in tRNAs without using a nucleic acid template. Adds these three nucleotides in the order of C, C, and A to the tRNA nucleotide-73, using CTP and ATP as substrates and producing inorganic pyrophosphate. tRNA 3'-terminal CCA addition is required both for tRNA processing and repair. Also involved in tRNA surveillance by mediating tandem CCA addition to generate a CCACCA at the 3' terminus of unstable tRNAs. While stable tRNAs receive only 3'-terminal CCA, unstable tRNAs are marked with CCACCA and rapidly degraded. The polypeptide is CCA-adding enzyme (Enterococcus faecalis (strain ATCC 700802 / V583)).